A 271-amino-acid chain; its full sequence is Mannosyl-3-phosphoglycerate phosphatase (271 aa).

Asp-13 (nucleophile) is an active-site residue. Residues Asp-13, Asp-15, and Asp-214 each contribute to the Mg(2+) site.

Belongs to the HAD-like hydrolase superfamily. MPGP family. The cofactor is Mg(2+).

It is found in the cytoplasm. It catalyses the reaction 2-O-(alpha-D-mannosyl)-3-phosphoglycerate + H2O = (2R)-2-O-(alpha-D-mannosyl)-glycerate + phosphate. The polypeptide is Mannosyl-3-phosphoglycerate phosphatase (yedP) (Escherichia coli O6:K15:H31 (strain 536 / UPEC)).